The primary structure comprises 808 residues: Ribosome biogenesis protein BOP1 homolog (808 aa).

2 stretches are compositionally biased toward low complexity: residues 1–25 and 33–50; these read MTSPKGKPSPKRSAPAPATAALTPC and ATSSASASASSHISSSFD. Residues 1 to 55 are disordered; it reads MTSPKGKPSPKRSAPAPATAALTPCAEERTEGATSSASASASSHISSSFDSPRDD. WD repeat units lie at residues 430–469, 640–680, 682–720, 724–766, and 777–808; these read GHTATVRSVSVSPNGQYLATGCDDHLVRVFEVQTGRLMKR, KFSE…RRFK, SGGVTTCLSIHPEGDNFLVGDTTSHTSWFDMDFSDKPYK, SHKG…DYNK, and KHQRPVYAVAWHPTLAWLFTSTEDGVVTAWTE.

Belongs to the WD repeat BOP1/ERB1 family.

It is found in the nucleus. The protein resides in the nucleolus. It localises to the nucleoplasm. In terms of biological role, required for maturation of ribosomal RNAs and formation of the large ribosomal subunit. The sequence is that of Ribosome biogenesis protein BOP1 homolog from Leishmania major.